The primary structure comprises 483 residues: MGNEVRVRYAPSPTGHLHIGNARTALFNYLFARSQGGKFIIRIEDTDQKRNVEGGEESQLRHLQWLGIDWDESIDKDGGYGPYRQSERNDIYKKYYDELLEKDLAYKCYCTAEELEEEREAQIARSEMPRYSGKCSHLSKEEEDKLIAEGREPSIRFRVPKGEIIKFDDMVKGEISFETDGIGDFVIVKKDGTPTYNFAVAVDDHLMKMTHILRGEDHISNTPKQIMIFNAFGWDVPLFGHMTLIVNENRKKLSKRDESIIQFIEQYKNLGYLPEALFNFIALLGWSPVGEEELFTKEQFIDIFDVNRLSKSPALFDMHKLKWVNNQYVKALDLDQVVALTLPHLQKAGKVSEQLSDEKNTWVRKLIALYHEQLSYGAEIVELTELFFKEQIEYNQEAKEVLAEEQVPEVMASFAGQLERLESFTPDEIKAAIKAVQKETGHKGKKLFMPIRVAVTGQTHGPELPQSIELLGKETVLNRIKQI.

A 'HIGH' region motif is present at residues 11–21 (PSPTGHLHIGN). Zn(2+)-binding residues include Cys-108, Cys-110, Cys-135, and His-137. Residues 252 to 256 (KLSKR) carry the 'KMSKS' region motif. Lys-255 lines the ATP pocket.

This sequence belongs to the class-I aminoacyl-tRNA synthetase family. Glutamate--tRNA ligase type 1 subfamily. Monomer. It depends on Zn(2+) as a cofactor.

Its subcellular location is the cytoplasm. The enzyme catalyses tRNA(Glu) + L-glutamate + ATP = L-glutamyl-tRNA(Glu) + AMP + diphosphate. Catalyzes the attachment of glutamate to tRNA(Glu) in a two-step reaction: glutamate is first activated by ATP to form Glu-AMP and then transferred to the acceptor end of tRNA(Glu). The chain is Glutamate--tRNA ligase from Bacillus pumilus (strain SAFR-032).